The following is a 287-amino-acid chain: Protease HtpX (287 aa).

Helical transmembrane passes span 4–24 and 33–53; these read IFLLIATNMAILLVASIVMSI and GGLLVFAAIFGFGGAFISLAI. Histidine 139 contributes to the Zn(2+) binding site. The active site involves glutamate 140. Histidine 143 contributes to the Zn(2+) binding site. 2 helical membrane passes run 154–174 and 195–215; these read LIQGVVNTFVIFAARVVAGII and AVVFVLDMLFGILASMIVAYF. Glutamate 220 provides a ligand contact to Zn(2+).

It belongs to the peptidase M48B family. Zn(2+) is required as a cofactor.

It is found in the cell inner membrane. The chain is Protease HtpX from Shewanella pealeana (strain ATCC 700345 / ANG-SQ1).